The chain runs to 146 residues: Protein archease (146 aa).

Residues aspartate 16, aspartate 145, and isoleucine 146 each coordinate Ca(2+).

Belongs to the archease family.

Its function is as follows. Activates the tRNA-splicing ligase complex by facilitating the enzymatic turnover of catalytic subunit RtcB. Acts by promoting the guanylylation of RtcB, a key intermediate step in tRNA ligation. Can also alter the NTP specificity of RtcB such that ATP, dGTP or ITP is used efficiently. In Methanosarcina acetivorans (strain ATCC 35395 / DSM 2834 / JCM 12185 / C2A), this protein is Protein archease.